The chain runs to 248 residues: Segregation and condensation protein A (248 aa).

This sequence belongs to the ScpA family. As to quaternary structure, component of a cohesin-like complex composed of ScpA, ScpB and the Smc homodimer, in which ScpA and ScpB bind to the head domain of Smc. The presence of the three proteins is required for the association of the complex with DNA.

The protein localises to the cytoplasm. Participates in chromosomal partition during cell division. May act via the formation of a condensin-like complex containing Smc and ScpB that pull DNA away from mid-cell into both cell halves. The polypeptide is Segregation and condensation protein A (Bacillus cytotoxicus (strain DSM 22905 / CIP 110041 / 391-98 / NVH 391-98)).